The chain runs to 1163 residues: MSGRKAQGKTLGVNMVRQGVRSLSNKIKQKTKQIGNRPGPSRGVQGFIFFFLFNVLTGRKITAHLKKLWRMLDPRQGLAVLKKVKRVVASLMRGLSSRKRRSYEVLTVQFLILGMLLMTGGVTLVRKSRWLLLNVTSEDLGKTFSVGTGNCTTNILEAKNWCPDSMEYNCPNLSPREEPDDIDCWCYGVENVRVAYGKCDSAGRSRRSRRAIDLPTHENHGLKTRQEKWMTGRMGERQLQKIERWLVRNPFFAVTALAIAYLVGSNMTQRVVIALLVLAVGPAYSAHCIGITDRDFIEGVHGGTWVSATLEQDKCVTVMAPDKPSLDISLETVAIDGPAEARKVCYSAVLTHVKINDKCPSTGEAHLAEENEGDHACKRTYSDRGWGNGCGLFGKGSIVACAKFTCAKSMSLFEVDQTKIQYVIRAQLHVGAKQENWNADIKTLKFDALSGSQEAEFTGYGKATLECQVQTAVDFSNSYIAEMEKESWIVDRQWAQDLTLPWQSGSGGVWREMHHLVEFEPPHAATIKVLALGNQEGSLKTALTGAMRVTKDTNGSNLYKLHGGHVSCRVKLSALTLKGTSYKMCTDKMSFVKNPTDTGHGTAVMQVKVPKGAPCRIPVMVADDLTASVNKGILVTVNPIASTNEDEVLIEVNPPFGDSYIIVGTGDSRLTYQWHKEGSSIGKLFTQTMKGAERLAVMGDAAWDFSSAGGFFTSVGKGIHMVFGSAFQGLFGGLSWITKVIMGAVLIWVGINMRNMTMSMSMILVGVIMMFLSLGVGADQGCAINFGKRELKCGDGVFIFRDSDDWLNKYSYYPEDPVKLASIVKASFEEGKCGLNSVDSLEHEMWRSRADEINAILEENEVDISVVVQDPKNIYQRGTHPFSRIRDGLQYGWKTWGKNLVFSPGRKNGSFIIDGKSRKECPFSNRVWNSLQIEEFGTGVFTTRVYMDAVFEYTMDCDGSILGAAVNGKKSAHGSPTFWMGSHEVNGTWMIHTLETLDYKECEWPLTHTIGTSVEESDMFMPRSIGGPVSSHNHIPGYKVQTNGPWMQVPLEVKREACPGTSVVVDGGCDGRGKSTRSTTDSGKIIPEWCCRSCTMPPVSFHGSDGCWYPMEIRPRKTHDNHLVRSWVTAGEVHAVPFGLVSMMIAMEVFLKKRQGPKQILVG.

Over 1 to 104 the chain is Cytoplasmic; it reads MSGRKAQGKT…LSSRKRRSYE (104 aa). Residues 38 to 72 are hydrophobic; homodimerization of capsid protein C; it reads PGPSRGVQGFIFFFLFNVLTGRKITAHLKKLWRML. Residues 102–121 constitute a propeptide, ER anchor for the capsid protein C, removed in mature form by serine protease NS3; that stretch reads SYEVLTVQFLILGMLLMTGG. A helical membrane pass occupies residues 105–125; the sequence is VLTVQFLILGMLLMTGGVTLV. Topologically, residues 126-244 are extracellular; sequence RKSRWLLLNV…GERQLQKIER (119 aa). N-linked (GlcNAc...) asparagine; by host glycans are attached at residues Asn-134 and Asn-150. The chain crosses the membrane as a helical span at residues 245–265; sequence WLVRNPFFAVTALAIAYLVGS. Topologically, residues 266 to 270 are cytoplasmic; it reads NMTQR. A helical membrane pass occupies residues 271-285; that stretch reads VVIALLVLAVGPAYS. Topologically, residues 286–730 are extracellular; sequence AHCIGITDRD…MVFGSAFQGL (445 aa). Intrachain disulfides connect Cys-288–Cys-315, Cys-345–Cys-406, Cys-359–Cys-390, Cys-377–Cys-401, Cys-467–Cys-568, and Cys-585–Cys-615. The interval 383–396 is fusion peptide; that stretch reads DRGWGNGCGLFGKG. A helical transmembrane segment spans residues 731-751; the sequence is FGGLSWITKVIMGAVLIWVGI. The Extracellular segment spans residues 752–757; that stretch reads NMRNMT. Residues 758–778 form a helical membrane-spanning segment; sequence MSMSMILVGVIMMFLSLGVGA. The Extracellular segment spans residues 779-1163; the sequence is DQGCAINFGK…RQGPKQILVG (385 aa). Disulfide bonds link Cys-782–Cys-793, Cys-833–Cys-921, Cys-957–Cys-1002, Cys-1058–Cys-1107, Cys-1069–Cys-1091, and Cys-1090–Cys-1094. N-linked (GlcNAc...) asparagine; by host glycosylation is found at Asn-908 and Asn-986.

Homodimer. Interacts (via N-terminus) with host EXOC1 (via C-terminus); this interaction results in EXOC1 degradation through the proteasome degradation pathway. In terms of assembly, forms heterodimers with envelope protein E in the endoplasmic reticulum and Golgi. As to quaternary structure, homodimer; in the endoplasmic reticulum and Golgi. Homodimer; Homohexamer when secreted. Interacts with envelope protein E. Specific enzymatic cleavages in vivo yield mature proteins. The nascent capsid protein C contains a C-terminal hydrophobic domain that act as a signal sequence for translocation of prM into the lumen of the ER. Mature capsid protein C is cleaved at a site upstream of this hydrophobic domain by NS3. prM is cleaved in post-Golgi vesicles by a host furin, releasing the mature small envelope protein M, and peptide pr. Non-structural protein 2A-alpha, a C-terminally truncated form of non-structural protein 2A, results from partial cleavage by NS3. Specific enzymatic cleavages in vivo yield mature proteins peptide 2K acts as a signal sequence and is removed from the N-terminus of NS4B by the host signal peptidase in the ER lumen. Signal cleavage at the 2K-4B site requires a prior NS3 protease-mediated cleavage at the 4A-2K site. In terms of processing, cleaved in post-Golgi vesicles by a host furin, releasing the mature small envelope protein M, and peptide pr. This cleavage is incomplete as up to 30% of viral particles still carry uncleaved prM. Post-translationally, N-glycosylated. N-glycosylated. The excreted form is glycosylated and this is required for efficient secretion of the protein from infected cells.

The protein localises to the virion. It localises to the host nucleus. Its subcellular location is the host cytoplasm. It is found in the host perinuclear region. The protein resides in the secreted. The protein localises to the virion membrane. It localises to the host endoplasmic reticulum membrane. Plays a role in virus budding by binding to the cell membrane and gathering the viral RNA into a nucleocapsid that forms the core of a mature virus particle. During virus entry, may induce genome penetration into the host cytoplasm after hemifusion induced by the surface proteins. Can migrate to the cell nucleus where it modulates host functions. Its function is as follows. Inhibits RNA silencing by interfering with host Dicer. In terms of biological role, prevents premature fusion activity of envelope proteins in trans-Golgi by binding to envelope protein E at pH6.0. After virion release in extracellular space, gets dissociated from E dimers. Functionally, acts as a chaperone for envelope protein E during intracellular virion assembly by masking and inactivating envelope protein E fusion peptide. prM is the only viral peptide matured by host furin in the trans-Golgi network probably to avoid catastrophic activation of the viral fusion activity in acidic Golgi compartment prior to virion release. prM-E cleavage is inefficient, and many virions are only partially matured. These uncleaved prM would play a role in immune evasion. May play a role in virus budding. Exerts cytotoxic effects by activating a mitochondrial apoptotic pathway through M ectodomain. May display a viroporin activity. Its function is as follows. Binds to host cell surface receptor and mediates fusion between viral and cellular membranes. Envelope protein is synthesized in the endoplasmic reticulum in the form of heterodimer with protein prM. They play a role in virion budding in the ER, and the newly formed immature particle is covered with 60 spikes composed of heterodimer between precursor prM and envelope protein E. The virion is transported to the Golgi apparatus where the low pH causes dissociation of PrM-E heterodimers and formation of E homodimers. prM-E cleavage is inefficient, and many virions are only partially matured. These uncleaved prM would play a role in immune evasion. In terms of biological role, involved in immune evasion, pathogenesis and viral replication. Once cleaved off the polyprotein, is targeted to three destinations: the viral replication cycle, the plasma membrane and the extracellular compartment. Essential for viral replication. Required for formation of the replication complex and recruitment of other non-structural proteins to the ER-derived membrane structures. Excreted as a hexameric lipoparticle that plays a role against host immune response. Antagonizing the complement function. Binds to the host macrophages and dendritic cells. Inhibits signal transduction originating from Toll-like receptor 3 (TLR3). Functionally, component of the viral RNA replication complex that functions in virion assembly and antagonizes the host immune response. In Aedes aegypti (Yellowfever mosquito), this protein is Genome polyprotein.